Reading from the N-terminus, the 140-residue chain is Large ribosomal subunit protein uL14 (140 aa).

It belongs to the universal ribosomal protein uL14 family.

The polypeptide is Large ribosomal subunit protein uL14 (RpL23-A) (Aedes aegypti (Yellowfever mosquito)).